The sequence spans 119 residues: Large ribosomal subunit protein uL18 (119 aa).

This sequence belongs to the universal ribosomal protein uL18 family. As to quaternary structure, part of the 50S ribosomal subunit; part of the 5S rRNA/L5/L18/L25 subcomplex. Contacts the 5S and 23S rRNAs.

This is one of the proteins that bind and probably mediate the attachment of the 5S RNA into the large ribosomal subunit, where it forms part of the central protuberance. The chain is Large ribosomal subunit protein uL18 from Staphylococcus aureus (strain Mu3 / ATCC 700698).